A 163-amino-acid polypeptide reads, in one-letter code: MIAFIKHQVKTFGLIELFKGLAVTGKYLFKKKITVRYPEEKTPLSPRFRGHHALRRYENGEERCIACKLCEAVCPANAITIESEERDDGTRRTTQYDIDMFKCIYCGFCEEACPVDAVVETRVFEYEFHERGTHIMTKEQLLAFGDKHESQIAADRAADAKYR.

4Fe-4S ferredoxin-type domains are found at residues 55-84 (RRYE…IESE) and 94-123 (TQYD…ETRV). 8 residues coordinate [4Fe-4S] cluster: C64, C67, C70, C74, C103, C106, C109, and C113.

Belongs to the complex I 23 kDa subunit family. As to quaternary structure, NDH-1 is composed of 14 different subunits. Subunits NuoA, H, J, K, L, M, N constitute the membrane sector of the complex. It depends on [4Fe-4S] cluster as a cofactor.

The protein localises to the cell inner membrane. It carries out the reaction a quinone + NADH + 5 H(+)(in) = a quinol + NAD(+) + 4 H(+)(out). Functionally, NDH-1 shuttles electrons from NADH, via FMN and iron-sulfur (Fe-S) centers, to quinones in the respiratory chain. The immediate electron acceptor for the enzyme in this species is believed to be ubiquinone. Couples the redox reaction to proton translocation (for every two electrons transferred, four hydrogen ions are translocated across the cytoplasmic membrane), and thus conserves the redox energy in a proton gradient. The chain is NADH-quinone oxidoreductase subunit I from Hydrogenovibrio crunogenus (strain DSM 25203 / XCL-2) (Thiomicrospira crunogena).